The primary structure comprises 273 residues: MKRFSDLNQIDISKLEVFFQPAKKTKKQTVVFAHGFSVFHSYFQSFYKTLTDYDYYAPLWPGHNVNGFDYKELSPIHYGELLAAFIENKDLENIVLIGHSMGAAVCSYAMNLLNAKRVEKLILLAPLSYCNLLRYFKIKSSFKKDKAERMANFKAMFQTKFSNLTDENSWENELSKHSKMAKKLSNNILKELPVLNKTYKNLKLPVFLVLAQNDLFMPTKLTLSYFNKYLIKNNNLQSSVILNSEHQMFNSKYESFCKAMDDILNHNKLSKIY.

The active site involves His34. The Charge relay system role is filled by Ser100.

The protein belongs to the lipase/esterase LIP3/BchO family.

This is Putative esterase/lipase 3 from Mycoplasma genitalium (strain ATCC 33530 / DSM 19775 / NCTC 10195 / G37) (Mycoplasmoides genitalium).